Consider the following 320-residue polypeptide: Malate dehydrogenase (320 aa).

NAD(+) contacts are provided by residues 10–15 (GSGMIG) and D34. R83 and R89 together coordinate substrate. NAD(+)-binding positions include N96 and 119–121 (ITN). N121 and R152 together coordinate substrate. H176 (proton acceptor) is an active-site residue.

This sequence belongs to the LDH/MDH superfamily. MDH type 3 family.

The catalysed reaction is (S)-malate + NAD(+) = oxaloacetate + NADH + H(+). Functionally, catalyzes the reversible oxidation of malate to oxaloacetate. The polypeptide is Malate dehydrogenase (Bartonella tribocorum (strain CIP 105476 / IBS 506)).